The following is a 489-amino-acid chain: MDASAAISQLRQGQKPEWPQNANTSDFAKTLDNSSEFPKTLRHEYVVPTKAQLKRKTLNDDAQTAAKASSSDDEGIYFCGNSLGLQPKAVGEYLNAYLKTWGSIAVGSHFTPMADSPLTPFQDMAAECARRMSDIVGASPSEIVAMNTLTINLHLMMAAFYKPTEKKHKIMCEWRPFPSDWYAIESQIEWHGLDPKKSMLLVKPDDGYLMTTESILKLIDQEADELALIMLPGIQYYSGQLLDIPTITTHARKHGITIGWDLAHAAGNVELKLHDWDVDFACWCTYKYMNAGAGAIAGAFVHSKHGDNGSNVGLKGWYGHDKSSRFLMDNKFVPTPGAQGFQCSNPSAVDLTCLAGSLSVFQKTSVADLRSRSLLLTAYAEHLLTQIASRNIKDGNFPFQIISPLDPRFRGAQLSVLLQEDVMEEVFAGLEENGVICDKRKPGIIRVAPVPMYNTFEDVYKFMHILEGALQPKAEQKTQAHGEAVEARL.

Positions 1–12 are enriched in polar residues; sequence MDASAAISQLRQ. The segment at 1 to 25 is disordered; the sequence is MDASAAISQLRQGQKPEWPQNANTS. Residues L149, T150, 177–180, D261, H264, and Y286 contribute to the pyridoxal 5'-phosphate site; that span reads FPSD. K287 is modified (N6-(pyridoxal phosphate)lysine). W317 and N345 together coordinate pyridoxal 5'-phosphate.

It belongs to the kynureninase family. Homodimer. The cofactor is pyridoxal 5'-phosphate.

The protein localises to the cytoplasm. The enzyme catalyses L-kynurenine + H2O = anthranilate + L-alanine + H(+). It carries out the reaction 3-hydroxy-L-kynurenine + H2O = 3-hydroxyanthranilate + L-alanine + H(+). Its pathway is amino-acid degradation; L-kynurenine degradation; L-alanine and anthranilate from L-kynurenine: step 1/1. It functions in the pathway cofactor biosynthesis; NAD(+) biosynthesis; quinolinate from L-kynurenine: step 2/3. Its function is as follows. Catalyzes the cleavage of L-kynurenine (L-Kyn) and L-3-hydroxykynurenine (L-3OHKyn) into anthranilic acid (AA) and 3-hydroxyanthranilic acid (3-OHAA), respectively. The sequence is that of Kynureninase 2 from Phaeosphaeria nodorum (strain SN15 / ATCC MYA-4574 / FGSC 10173) (Glume blotch fungus).